A 238-amino-acid polypeptide reads, in one-letter code: Large ribosomal subunit protein uL1 (238 aa).

This sequence belongs to the universal ribosomal protein uL1 family. In terms of assembly, part of the 50S ribosomal subunit.

Binds directly to 23S rRNA. The L1 stalk is quite mobile in the ribosome, and is involved in E site tRNA release. Functionally, protein L1 is also a translational repressor protein, it controls the translation of the L11 operon by binding to its mRNA. The protein is Large ribosomal subunit protein uL1 of Beutenbergia cavernae (strain ATCC BAA-8 / DSM 12333 / CCUG 43141 / JCM 11478 / NBRC 16432 / NCIMB 13614 / HKI 0122).